Reading from the N-terminus, the 149-residue chain is Leghemoglobin (149 aa).

The Globin domain maps to 3 to 147 (AFSEKQESLV…LAAAIKKAMG (145 aa)). The residue at position 31 (Tyr-31) is a Nitrated tyrosine. Ser-46 contacts heme b. Position 46 is a phosphoserine (Ser-46). O2 is bound at residue His-62. Residues Lys-65, His-94, and Lys-97 each contribute to the heme b site. Tyr-135 is modified (nitrated tyrosine).

Belongs to the plant globin family. As to quaternary structure, monomer. Nitrated in effective nodules and particularly in hypoxic conditions; this mechanism may play a protective role in the symbiosis by buffering toxic peroxynitrite NO(2)(-). Nitration level decrease during nodule senescence. Post-translationally, phosphorylation at Ser-46 disrupts the molecular environment of its porphyrin ring oxygen binding pocket, thus leading to a reduced oxygen consumption and to the delivery of oxygen O(2) to symbiosomes. In terms of tissue distribution, root nodules.

Its subcellular location is the cytoplasm. It localises to the cytosol. The protein localises to the nucleus. Functionally, leghemoglobin that reversibly binds oxygen O(2) through a pentacoordinated heme iron. In root nodules, facilitates the diffusion of oxygen to the bacteroids while preventing the bacterial nitrogenase from being inactivated by buffering dioxygen, nitric oxide and carbon monoxide, and promoting the formation of reactive oxygen species (ROS, e.g. H(2)O(2)). This role is essential for symbiotic nitrogen fixation (SNF). The chain is Leghemoglobin from Canavalia lineata (Beach bean).